The primary structure comprises 269 residues: MRCTRAIRQTARTGWLTWLAILAVTAPMTSPAWADDPPATVYRYDSRPPEDVFQNGFTAWGNNDNVLEHLTGRSCQVGSSNSAFVSTSSSRRYTEVYLEHRMQEAVEAERAGRGTGHFIGYIYEIRADNNFYGAASSYFEYVDTYGDNAGRILAGALATYQSEYLAHRRIPPENIRTVTRVYHNGITGETTTTEYPNLRYVSQQTRANTNPYTSRRSTASIVGTLVRMAPVTGACMARQAESPEAMAAWSERTGEAMVLVYYESIAYSF.

An N-terminal signal peptide occupies residues 1 to 34 (MRCTRAIRQTARTGWLTWLAILAVTAPMTSPAWA).

It belongs to the bacterial exotoxin subunit A family.

The polypeptide is Pertussis toxin subunit 1 homolog (ptxA) (Bordetella parapertussis (strain 12822 / ATCC BAA-587 / NCTC 13253)).